Here is a 150-residue protein sequence, read N- to C-terminus: Triosephosphate isomerase (150 aa).

2 residues coordinate substrate: Asn9 and Lys11. The active-site Electrophile is His95.

The protein belongs to the triosephosphate isomerase family. Homodimer.

It is found in the cytoplasm. The catalysed reaction is D-glyceraldehyde 3-phosphate = dihydroxyacetone phosphate. It participates in carbohydrate biosynthesis; gluconeogenesis. It functions in the pathway carbohydrate degradation; glycolysis; D-glyceraldehyde 3-phosphate from glycerone phosphate: step 1/1. The chain is Triosephosphate isomerase (tpiA) from Mycoplasmoides pirum (Mycoplasma pirum).